The following is a 74-amino-acid chain: Small cysteine-rich protein 8 (74 aa).

The N-terminal stretch at 1–21 (MAAKFHLCLLLIILGTITVQG) is a signal peptide. Positions 22-31 (ARHPGKPHFF) are excised as a propeptide.

Belongs to the Cnidaria small cysteine-rich protein (SCRiP) family. beta subfamily. Post-translationally, contains 4 disulfide bonds.

It is found in the secreted. The protein resides in the nematocyst. Functionally, induces neurotoxic symptoms on zebrafish. Has also been claimed to be implied in calcification, but tests on homolog proteins suggest that proteins of this family have a neurotoxic function and not a calcification function. The chain is Small cysteine-rich protein 8 from Orbicella faveolata (Mountainous star coral).